The sequence spans 312 residues: Small ribosomal subunit protein uS2 (312 aa).

Residues 232-312 (RASGAAERDE…AAPEGEAAAE (81 aa)) are disordered. A compositionally biased stretch (basic and acidic residues) spans 245 to 284 (REGRDDRGDRRDDRRGPRRGDRRDDRRDRGGDRGGDRRGP). The span at 291–312 (AAPVASAEPAAEAAPEGEAAAE) shows a compositional bias: low complexity.

It belongs to the universal ribosomal protein uS2 family.

The protein is Small ribosomal subunit protein uS2 of Myxococcus xanthus (strain DK1622).